Reading from the N-terminus, the 625-residue chain is Probable potassium transport system protein Kup (625 aa).

A run of 12 helical transmembrane segments spans residues 13–33, 53–73, 103–123, 141–161, 172–192, 206–226, 250–270, 282–302, 340–360, 369–389, 400–420, and 422–442; these read TALAALGVVFGDIGTSPLYAL, ILSIIFWCLMLIISIKYVAIV, IYMIAIGFIGASLFFGDGIIT, VFDPFIMPIAIAIIVTLFLVQ, FGPITLVWFLSLGILGIHSVI, AIQFIYHHPIMTFFVMGAVVL, WFFVVLPCLVLNYAGQGALLL, LLVPQWALYPMIIMATMATVI, IYVPFLNWLLLIAIIILILIF, AYGLAVTLTMLCDTILVAVFI, VLILIIPFFILESVLVGATSL, and ILSGGWVPLLIGAIAVTILMT.

It belongs to the HAK/KUP transporter (TC 2.A.72) family.

The protein resides in the cell inner membrane. It carries out the reaction K(+)(in) + H(+)(in) = K(+)(out) + H(+)(out). Transport of potassium into the cell. Likely operates as a K(+):H(+) symporter. The protein is Probable potassium transport system protein Kup of Acinetobacter baumannii (strain SDF).